Consider the following 1481-residue polypeptide: MQRSPLEKASVISKLFFSWTRPILRKGYRQRLELSDIYQIPSADSADNLSEKLEREWDRELVSKKNPKLINALRRCFFWRFMFYGIILYLGEVTKAVQPLLLGRIIASYDPDNEAERSIAIYLGIGLCLLFIVRTLLLHPAIFGLHHIGMQMRIAMFSLIYKKTLKLSSRVLDKISIGQLVSLLSNNLNKFDEGLALAHFVWIAPLQVTLLMGLLWDLLQASAFCGLAFLIVLALFQAGLGRMMMKYRDQRAGKINERLVITSEMIENIQSVKAYCWEEAMEKMIENLRQTELKLTRKAAYVRYFNSSAFFFSGFFVVFLSVLPYALIKGIVLRRIFTTISFCIVLRMAVTRQFPWAVQTWYDSLGAINKIQDFLQKQEYKTLEYNLTTTEVVMENVTAFWEEGFGELFEKAKQNNDRKISNGDNSLFFSNFSLLGTPVLKDISFKIERGQLLAVAGSTGAGKTSLLMMIMGELEPSEGKIKHSGRISFCSQFSWIMPGTIKENIIFGVSYDEYRYRSVIKACQLEEDISKFAEKDNIVLGEGGIQLSGGQRARISLARAVYKDADLYLLDSPFGYLDVLTEKEIFESCVCKLMANKTRILVTSKMEHLKKADKILILHEGSSYFYGTFSELQNLRPDFSSKLMGYDSFDQFSAERRNSILTETLRRFSLEGDATVSWNETKKQSFKQTGEFGDKRKNSILNPINSIRKFSIVQKTPLQMNGIEEDSDEPLERRLSLVPDSEQGEAILPRSNVINTGPTFQRRRRQSVLNLMTRSSVNQGQSIHRKTATSTRKMSLAPQANLTEMDIYSRRLSQDSGLEISEEINEDDLKECFFDDVESIPTVTTWNTYLRYITIHKSLIFVLIWCLVIFLAEVAASLVVLWLLKETPPQDSGNSTKGANNSYAVIITSTSSYYVFYIYVGVADTLLALGLFRGLPLVHTLITVSKILHHKMLHSVLQAPMSTLNTLKAGGILNRFSKDMAILDDLLPLTIFDFIQLLLIVIGAVAVVSVLQPYIFLATVPVIAAFIILRAYFLHTSQQLKQLESEGRSPIFTHLVTSLKGLWTLRAFGRQPYFETLFHKALNLHTANWFLYLSTLRWFQMRIEMIFVIFFIAVTFISILTTGEGEGTVGIILTLAMNIMSTLQWAVNSSIDVDSLMRSVSRVFKFIDMPTEDSKPTKSVKPSKDGQLSKVMIIENQYVKKDDIWPSGGQMTVKDLTAKYTDGGNAILENISFSISPGQRVGLLGRTGSGKSTLLSAFLRLLNTEGEIQIDGVSWDSITLQQWRKAFGVIPQKVFIFSGTFRKNLDPYGQWNDQEIWKVADEVGLRSVIEQFPGKLDFVLVDGGNVLSHGHKQLICLARSVLSKAKILLLDEPSAHLDPITYQIIRRTLKQAFADCTVILSEHRIEAMLECQRFLVIEENKVRQYDSIQKLLSEKSLFQQAISSSDPLKLFPHRNSSKHKSRSKIAALQEETEEEVQETRL.

The Cytoplasmic segment spans residues methionine 1 to phenylalanine 77. The chain crosses the membrane as a helical span at residues phenylalanine 78–glutamine 98. Residues phenylalanine 81–leucine 365 enclose the ABC transmembrane type-1 1 domain. Residues proline 99 to tyrosine 122 lie on the Extracellular side of the membrane. A helical transmembrane segment spans residues leucine 123–histidine 146. The Cytoplasmic segment spans residues histidine 147–leucine 195. Residues alanine 196 to tryptophan 216 traverse the membrane as a helical segment. The Extracellular segment spans residues aspartate 217–serine 222. The chain crosses the membrane as a helical span at residues alanine 223–methionine 243. Residues methionine 244–lysine 298 lie on the Cytoplasmic side of the membrane. Residues alanine 299–phenylalanine 319 form a helical membrane-spanning segment. Residues leucine 320 to threonine 339 are Extracellular-facing. The chain crosses the membrane as a helical span at residues isoleucine 340 to valine 358. Topologically, residues glutamine 359–serine 858 are cytoplasmic. ATP-binding positions include tryptophan 401, serine 433, glycine 457–threonine 464, and glutamine 492. The ABC transporter 1 domain maps to asparagine 422–glycine 645. Residue cysteine 523 is the site of S-palmitoyl cysteine attachment. A phosphoserine mark is found at serine 548 and serine 659. A disordered R region region spans residues serine 653–glutamate 831. Serine 669 bears the Phosphoserine; by PKA mark. Serine 685 is modified (phosphoserine). Lysine 687 is covalently cross-linked (Glycyl lysine isopeptide (Lys-Gly) (interchain with G-Cter in ubiquitin)). A phosphoserine mark is found at serine 699 and serine 711. Threonine 716 is subject to Phosphothreonine. 5 positions are modified to phosphoserine: serine 736, serine 767, serine 790, serine 795, and serine 813. A helical membrane pass occupies residues leucine 859–valine 879. Residues leucine 859 to serine 1155 enclose the ABC transmembrane type-1 2 domain. The Extracellular segment spans residues valine 880–isoleucine 918. Residues asparagine 894 and asparagine 900 are each glycosylated (N-linked (GlcNAc...) asparagine). Residues tyrosine 919–histidine 939 form a discontinuously helical membrane-spanning segment. At threonine 940–threonine 990 the chain is on the cytoplasmic side. Residues isoleucine 991 to leucine 1011 form a helical membrane-spanning segment. Residues glutamine 1012–proline 1013 are Extracellular-facing. The helical transmembrane segment at tyrosine 1014–leucine 1034 threads the bilayer. Residues histidine 1035–threonine 1095 are Cytoplasmic-facing. A helical transmembrane segment spans residues leucine 1096–phenylalanine 1116. Residues isoleucine 1117–glycine 1130 lie on the Extracellular side of the membrane. The chain crosses the membrane as a helical span at residues isoleucine 1131–isoleucine 1151. Topologically, residues aspartate 1152–leucine 1481 are cytoplasmic. The ABC transporter 2 domain maps to methionine 1211–serine 1444. Residues tyrosine 1220 and glycine 1245–serine 1252 each bind ATP. Positions arginine 1387 to leucine 1481 are interaction with GORASP2. A lipid anchor (S-palmitoyl cysteine) is attached at cysteine 1396. Phosphoserine occurs at positions 1445 and 1457. The interval lysine 1449–leucine 1481 is disordered. Residues phenylalanine 1451–serine 1463 are compositionally biased toward basic residues. The span at glutamate 1470–leucine 1481 shows a compositional bias: acidic residues. The short motif at threonine 1479–leucine 1481 is the PDZ-binding element.

This sequence belongs to the ABC transporter superfamily. ABCC family. CFTR transporter (TC 3.A.1.202) subfamily. As to quaternary structure, monomer; does not require oligomerization for channel activity. May form oligomers in the membrane. Interacts with SLC26A3, SLC26A6 and NHERF1. Interacts with SHANK2. Interacts with MYO6. Interacts (via C-terminus) with GOPC (via PDZ domain); this promotes CFTR internalization and thereby decreases channel activity. Interacts with SLC4A7 through NHERF1. Found in a complex with MYO5B and RAB11A. Interacts with ANO1. Interacts with SLC26A8. Interacts with AHCYL1; the interaction increases CFTR activity. Interacts with CSE1L. The core-glycosylated form interacts with GORASP2 (via PDZ GRASP-type 1 domain) in respone to ER stress. Interacts with MARCHF2; the interaction leads to CFTR ubiqtuitination and degradation. Interacts with ADGRG2. N-glycosylated. Post-translationally, phosphorylated; cAMP treatment promotes phosphorylation and activates the channel. Dephosphorylation decreases the ATPase activity (in vitro). Phosphorylation at PKA sites activates the channel. Phosphorylation at PKC sites enhances the response to phosphorylation by PKA. Phosphorylated by AMPK; this inhibits channel activity. In terms of processing, ubiquitinated, leading to its degradation in the lysosome. Deubiquitination by USP10 in early endosomes enhances its endocytic recycling to the cell membrane. Ubiquitinated by RNF185 during ER stress. Ubiquitinated by MARCHF2.

The protein localises to the apical cell membrane. The protein resides in the early endosome membrane. Its subcellular location is the cell membrane. It localises to the recycling endosome membrane. It is found in the endoplasmic reticulum membrane. The protein localises to the nucleus. The enzyme catalyses ATP + H2O + closed Cl(-) channel = ADP + phosphate + open Cl(-) channel.. The catalysed reaction is chloride(in) = chloride(out). It catalyses the reaction hydrogencarbonate(in) = hydrogencarbonate(out). It carries out the reaction ATP + H2O = ADP + phosphate + H(+). Functionally, epithelial ion channel that plays an important role in the regulation of epithelial ion and water transport and fluid homeostasis. Mediates the transport of chloride ions across the cell membrane. Possesses an intrinsic ATPase activity and utilizes ATP to gate its channel; the passive flow of anions through the channel is gated by cycles of ATP binding and hydrolysis by the ATP-binding domains. The ion channel is also permeable to HCO(3)(-); selectivity depends on the extracellular chloride concentration. Exerts its function also by modulating the activity of other ion channels and transporters. Contributes to the regulation of the pH and the ion content of the epithelial fluid layer. Modulates the activity of the epithelial sodium channel (ENaC) complex, in part by regulating the cell surface expression of the ENaC complex. May regulate bicarbonate secretion and salvage in epithelial cells by regulating the transporter SLC4A7. Can inhibit the chloride channel activity of ANO1. Plays a role in the chloride and bicarbonate homeostasis during sperm epididymal maturation and capacitation. The protein is Cystic fibrosis transmembrane conductance regulator of Equus caballus (Horse).